The following is a 201-amino-acid chain: Increased recombination centers protein 21 (201 aa).

Positions 122–200 (PLRINRKIVK…LQVCFIGVVC (79 aa)) constitute a Cytochrome b5 heme-binding domain. 2 residues coordinate heme: histidine 158 and histidine 182.

This sequence belongs to the cytochrome b5 family.

Involved in resistance to carboplatin and cisplatin. Is probably involved in a pathway contributing to genomic integrity. The protein is Increased recombination centers protein 21 (IRC21) of Saccharomyces cerevisiae (strain ATCC 204508 / S288c) (Baker's yeast).